A 442-amino-acid polypeptide reads, in one-letter code: MNIINILDCDSILCILPNLPDADKIKFISCCRDLYKIKPIIKFDDYYHYANMDKLGMVNQCRNLIHIITDDNINQLTMKNIRYLKLYTQRQFIKHKLPINITKLEISRIFEQDIGPFIPDALEELILCDYDKPIRKFLPPTLKTLKFIHTHKNVIKHQIAPNVTNLALGDYDGSLGKWLPNNLKYLDVGKFFRGKIGLNIPTTVETLILGDLFNSSINSLRNNIRVLKLGNSFNKPIDILPELLEELYIGRGFNSEITYLPKRLIRLEFDNECIFDHPINVLPNSLRIFKLGCFFNQSIEKCLPNGLIKLKFGDYFNKPIQKTVFSGCLFKTKKFIPDSVRVLKFGMYFNQNVNGGLPIGITKIVLGSHYTRAIRKIPASAKHIQLEVGFRMASMQHWNNITHFKIYYSQYEYYKDVLPEHEIVNNKTKGLTNYKLIKIKKN.

FNIP repeat units follow at residues 213-252 (FNSS…IGRG), 253-294 (FNSE…LGCF), and 295-348 (FNQS…FGMY).

The protein is Putative FNIP repeat-containing protein L170 of Acanthamoeba polyphaga mimivirus (APMV).